A 149-amino-acid polypeptide reads, in one-letter code: Protegrin-3 (149 aa).

The first 29 residues, 1 to 29 (METQRASLCLGRWSLWLLLLALVVPSASA), serve as a signal peptide directing secretion. A propeptide spanning residues 30–130 (QALSYREAVL…DITCNEVQGV (101 aa)) is cleaved from the precursor. Residues 61–80 (DQPPKADEDPGTPKPVSFTV) are disordered. 4 cysteine pairs are disulfide-bonded: cysteine 85/cysteine 96, cysteine 107/cysteine 124, cysteine 136/cysteine 145, and cysteine 138/cysteine 143. Arginine 148 carries the post-translational modification Arginine amide.

Belongs to the cathelicidin family.

Its subcellular location is the secreted. Microbicidal activity. Active against E.coli, Listeria monocytogenes and C.albicans, in vitro. This is Protegrin-3 (NPG3) from Sus scrofa (Pig).